Here is a 331-residue protein sequence, read N- to C-terminus: Olfactory receptor 7E178 (331 aa).

Topologically, residues 1–47 (MMDRYSFIMHQHRDDTVWCPSKIEEQNITRISEFHLMGLSDDLQLQP) are extracellular. The N-linked (GlcNAc...) asparagine glycan is linked to asparagine 27. A helical membrane pass occupies residues 48-68 (ILFGLFLSMYLVTLLGNLLII). Topologically, residues 69–80 (LTVSSDSHLHSP) are cytoplasmic. The chain crosses the membrane as a helical span at residues 81–100 (MYFFLSNLSLADVSFTSTTL). At 101 to 119 (PKMIVDIQTHNRAISYSGC) the chain is on the extracellular side. A disulfide bridge links cysteine 119 with cysteine 201. A helical membrane pass occupies residues 120–140 (LTQMSFFMLFGCLDSLLLTAM). Residues 141-164 (AYDRFVAICHPLHYQFIMNPRLCG) are Cytoplasmic-facing. The helical transmembrane segment at 165–185 (LLVFLSVLISLFVSQLHNSVV) threads the bilayer. At 186 to 218 (LQLTYFKSVDISHFFCDPSQLLNLACSDTFTNN) the chain is on the extracellular side. The chain crosses the membrane as a helical span at residues 219–239 (IVMYFVGAISGFLPISGIFFS). At 240–266 (YYKIVSSILRMPSPGGKYKAFSTCGSH) the chain is on the cytoplasmic side. The helical transmembrane segment at 267-287 (LSVVCLFYGTGLGVYLSSAVS) threads the bilayer. The Extracellular segment spans residues 288–293 (LSPRKG). Residues 294-314 (AVASIVYTVVTPMLNPFIYSL) traverse the membrane as a helical segment. Topologically, residues 315 to 331 (RNQDIKRAMWRLLRKTV) are cytoplasmic.

It belongs to the G-protein coupled receptor 1 family.

The protein resides in the cell membrane. Odorant receptor. This chain is Olfactory receptor 7E178, found in Mus musculus (Mouse).